The primary structure comprises 328 residues: MSEEKETIKERSSGFISVRDIPGVGSSIADKLEAAGYLSAWSIVVARAEELAERTGLPVLTVQKIIENARKMLGITFKTAREVKQERLNIGKITTGSKSLDELLGGGVETKTITEFFGEYGSGKTQICHQLSVNVQLTPEKGGLNGRAVYIDTEGTFRWERIEAMARALGLDPDKVMDNIYYMRAYNSDHQIAIVDELFTFVPKNDVRLVILDSVTSHFRAEYPGREHLAERQQKLNSHLHQLMRLAEAYNVAVVVTNQVMARPDVFYGDPTTAVGGHVLAHTPGVRIQLRKSKGNKRIARVVDAPHLPEGEVVFVITEEGIRDSEEE.

ATP is bound at residue 118–125 (GEYGSGKT).

This sequence belongs to the eukaryotic RecA-like protein family.

Functionally, involved in DNA repair and in homologous recombination. Binds and assemble on single-stranded DNA to form a nucleoprotein filament. Hydrolyzes ATP in a ssDNA-dependent manner and promotes DNA strand exchange between homologous DNA molecules. This Desulfurococcus amylolyticus (strain DSM 18924 / JCM 16383 / VKM B-2413 / 1221n) (Desulfurococcus kamchatkensis) protein is DNA repair and recombination protein RadA.